The following is a 345-amino-acid chain: Molybdate/tungstate import ATP-binding protein WtpC (345 aa).

Residues 2 to 231 form the ABC transporter domain; the sequence is LKVESISKDY…PKSEEVARFL (230 aa). 33 to 40 lines the ATP pocket; that stretch reads GPSGSGKT. The 66-residue stretch at 280 to 345 folds into the Mop domain; that stretch reads KTSARNVFKA…FKASAIHVFP (66 aa).

The protein belongs to the ABC transporter superfamily. Sulfate/tungstate importer (TC 3.A.1.6) family. In terms of assembly, the complex is composed of two ATP-binding proteins (WtpC), two transmembrane proteins (WtpB) and a solute-binding protein (WtpA).

It is found in the cell membrane. The enzyme catalyses tungstate(in) + ATP + H2O = tungstate(out) + ADP + phosphate + H(+). Its function is as follows. Part of the ABC transporter complex WtpABC involved in molybdate/tungstate import. Responsible for energy coupling to the transport system. The sequence is that of Molybdate/tungstate import ATP-binding protein WtpC (wtpC) from Pyrococcus horikoshii (strain ATCC 700860 / DSM 12428 / JCM 9974 / NBRC 100139 / OT-3).